The sequence spans 37 residues: Large ribosomal subunit protein bL36 (37 aa).

This sequence belongs to the bacterial ribosomal protein bL36 family.

In Rhodococcus erythropolis (strain PR4 / NBRC 100887), this protein is Large ribosomal subunit protein bL36.